Reading from the N-terminus, the 406-residue chain is uncharacterized protein (406 aa).

The protein localises to the plastid. Its subcellular location is the chloroplast. This is an uncharacterized protein from Euglena gracilis.